We begin with the raw amino-acid sequence, 220 residues long: Grancalcin (220 aa).

EF-hand domains follow at residues 51 to 86, 92 to 127, 122 to 157, and 158 to 193; these read SPAD…SGIS, FSLE…LNAW, AALN…MGYR, and LSPQ…ALTD. 10 residues coordinate Ca(2+): Asp-105, Asp-107, Thr-109, Lys-111, Glu-116, Asp-135, Asp-137, Ser-139, Thr-141, and Glu-146.

In terms of assembly, homodimer. Interacts with SRI and LCP1.

The protein localises to the cytoplasm. It localises to the cytoplasmic granule membrane. Its function is as follows. Calcium-binding protein that may play a role in the adhesion of neutrophils to fibronectin. May play a role in the formation of focal adhesions. This Mus musculus (Mouse) protein is Grancalcin (Gca).